Reading from the N-terminus, the 496-residue chain is Probable CtpA-like serine protease (496 aa).

Residues 1-16 (MDDKQHTSSSDDERAE) show a composition bias toward basic and acidic residues. A disordered region spans residues 1–27 (MDDKQHTSSSDDERAEIATSNQDQQTN). Residues 18 to 27 (ATSNQDQQTN) show a composition bias toward polar residues. Residues 39-59 (FISILIGTILITAVITVVAYI) traverse the membrane as a helical segment. The PDZ domain maps to 124–206 (TKSFNEGVSG…TEVTLTVQRG (83 aa)). Residues S329, D340, and K354 each act as charge relay system in the active site.

Belongs to the peptidase S41A family.

It localises to the cell membrane. The protein is Probable CtpA-like serine protease of Staphylococcus aureus (strain bovine RF122 / ET3-1).